Here is a 289-residue protein sequence, read N- to C-terminus: 4-diphosphocytidyl-2-C-methyl-D-erythritol kinase (289 aa).

The active site involves Lys-10. 94–104 (PVAAGLAGGSS) lines the ATP pocket. The active site involves Asp-136.

This sequence belongs to the GHMP kinase family. IspE subfamily.

The enzyme catalyses 4-CDP-2-C-methyl-D-erythritol + ATP = 4-CDP-2-C-methyl-D-erythritol 2-phosphate + ADP + H(+). It functions in the pathway isoprenoid biosynthesis; isopentenyl diphosphate biosynthesis via DXP pathway; isopentenyl diphosphate from 1-deoxy-D-xylulose 5-phosphate: step 3/6. Its function is as follows. Catalyzes the phosphorylation of the position 2 hydroxy group of 4-diphosphocytidyl-2C-methyl-D-erythritol. The polypeptide is 4-diphosphocytidyl-2-C-methyl-D-erythritol kinase (Bacillus velezensis (strain DSM 23117 / BGSC 10A6 / LMG 26770 / FZB42) (Bacillus amyloliquefaciens subsp. plantarum)).